Here is a 304-residue protein sequence, read N- to C-terminus: Iron(III) enterobactin esterase (304 aa).

An N-terminal signal peptide occupies residues 1–25 (MRTSLLVAALGLALAAALPGGAPLA). Residues serine 182, glutamate 242, and histidine 283 each act as charge relay system in the active site.

The protein belongs to the esterase D family. In terms of assembly, monomer.

The protein localises to the periplasm. It carries out the reaction Fe(III)-enterobactin + 3 H2O + H(+) = Fe(III)-[N-(2,3-dihydroxybenzoyl)-L-serine] + 2 N-(2,3-dihydroxybenzoyl)-L-serine. The enzyme catalyses Fe(III)-enterobactin + H2O = Fe(III)-[N-(2,3-dihydroxybenzoyl)-L-serine]3 + H(+). The catalysed reaction is Fe(III)-[N-(2,3-dihydroxybenzoyl)-L-serine]3 + H2O + H(+) = Fe(III)-[N-(2,3-dihydroxybenzoyl)-L-serine]2 + N-(2,3-dihydroxybenzoyl)-L-serine. It catalyses the reaction Fe(III)-[N-(2,3-dihydroxybenzoyl)-L-serine]2 + H2O + H(+) = Fe(III)-[N-(2,3-dihydroxybenzoyl)-L-serine] + N-(2,3-dihydroxybenzoyl)-L-serine. In terms of biological role, catalyzes the hydrolysis of ferric enterobactin (Fe-Ent). Hydrolyzes Fe-Ent into three molecules of 2,3-dihydroxybenzoylserine (DHBS) still complexed with ferric iron. Iron reduction is necessary to obtain complete release of the metal from DHBS. It can hydrolyze salmochelin S4 (diglucosyl-C-Ent) but is not involved in iron acquisition by this siderophore. The polypeptide is Iron(III) enterobactin esterase (Pseudomonas aeruginosa (strain ATCC 15692 / DSM 22644 / CIP 104116 / JCM 14847 / LMG 12228 / 1C / PRS 101 / PAO1)).